Here is a 220-residue protein sequence, read N- to C-terminus: MSLGLVGRKVGMTRVFTDDGDSIPVTVLEVGGNRVTQIKTDETDGYTAVQVTFGTRRASRVTKPLAGHLAKAGVEAGEIIVEFRIDATKAAELKLGDTIDVDLFSVDQKIDVQGTTIGKGYAGTIKRYHFSSGRASHGNSRSHNVPGSIGMAQDPGRVFPGKRMTGHMGDVTRTVQNLVIVRIDAERKLLLVKGAVPGAKSGFVVVSPAVKAKPQVAAAA.

A disordered region spans residues 132–153; it reads SGRASHGNSRSHNVPGSIGMAQ. Positions 133–145 are enriched in polar residues; sequence GRASHGNSRSHNV. At glutamine 153 the chain carries N5-methylglutamine.

The protein belongs to the universal ribosomal protein uL3 family. As to quaternary structure, part of the 50S ribosomal subunit. Forms a cluster with proteins L14 and L19. Methylated by PrmB.

Its function is as follows. One of the primary rRNA binding proteins, it binds directly near the 3'-end of the 23S rRNA, where it nucleates assembly of the 50S subunit. The chain is Large ribosomal subunit protein uL3 from Ralstonia nicotianae (strain ATCC BAA-1114 / GMI1000) (Ralstonia solanacearum).